A 354-amino-acid polypeptide reads, in one-letter code: Peptide chain release factor 1 (354 aa).

Residue Gln231 is modified to N5-methylglutamine.

This sequence belongs to the prokaryotic/mitochondrial release factor family. Post-translationally, methylated by PrmC. Methylation increases the termination efficiency of RF1.

The protein resides in the cytoplasm. Its function is as follows. Peptide chain release factor 1 directs the termination of translation in response to the peptide chain termination codons UAG and UAA. In Acholeplasma laidlawii (strain PG-8A), this protein is Peptide chain release factor 1.